A 139-amino-acid polypeptide reads, in one-letter code: UPF0102 protein Caul_0175 (139 aa).

Belongs to the UPF0102 family.

This is UPF0102 protein Caul_0175 from Caulobacter sp. (strain K31).